The following is a 417-amino-acid chain: Gamma-glutamyl phosphate reductase (417 aa).

The protein belongs to the gamma-glutamyl phosphate reductase family.

Its subcellular location is the cytoplasm. It catalyses the reaction L-glutamate 5-semialdehyde + phosphate + NADP(+) = L-glutamyl 5-phosphate + NADPH + H(+). It functions in the pathway amino-acid biosynthesis; L-proline biosynthesis; L-glutamate 5-semialdehyde from L-glutamate: step 2/2. Its function is as follows. Catalyzes the NADPH-dependent reduction of L-glutamate 5-phosphate into L-glutamate 5-semialdehyde and phosphate. The product spontaneously undergoes cyclization to form 1-pyrroline-5-carboxylate. This chain is Gamma-glutamyl phosphate reductase, found in Legionella pneumophila (strain Lens).